A 100-amino-acid chain; its full sequence is Urease subunit gamma (100 aa).

Belongs to the urease gamma subunit family. As to quaternary structure, heterotrimer of UreA (gamma), UreB (beta) and UreC (alpha) subunits. Three heterotrimers associate to form the active enzyme.

It is found in the cytoplasm. It carries out the reaction urea + 2 H2O + H(+) = hydrogencarbonate + 2 NH4(+). It functions in the pathway nitrogen metabolism; urea degradation; CO(2) and NH(3) from urea (urease route): step 1/1. The sequence is that of Urease subunit gamma from Mycolicibacterium vanbaalenii (strain DSM 7251 / JCM 13017 / BCRC 16820 / KCTC 9966 / NRRL B-24157 / PYR-1) (Mycobacterium vanbaalenii).